A 385-amino-acid polypeptide reads, in one-letter code: Chaperone protein DnaJ (385 aa).

Residues 3–68 (DYYEILGVTR…QKRAAYDRFG (66 aa)) enclose the J domain. The CR-type zinc finger occupies 135–213 (GAEVEITVPA…CHGHGQVRRE (79 aa)). Residues C148, C151, C165, C168, C187, C190, C201, and C204 each coordinate Zn(2+). CXXCXGXG motif repeat units follow at residues 148-155 (CEVCEGSG), 165-172 (CGTCGGAG), 187-194 (CPRCGGSG), and 201-208 (CSNCHGHG).

It belongs to the DnaJ family. As to quaternary structure, homodimer. Zn(2+) is required as a cofactor.

Its subcellular location is the cytoplasm. Functionally, participates actively in the response to hyperosmotic and heat shock by preventing the aggregation of stress-denatured proteins and by disaggregating proteins, also in an autonomous, DnaK-independent fashion. Unfolded proteins bind initially to DnaJ; upon interaction with the DnaJ-bound protein, DnaK hydrolyzes its bound ATP, resulting in the formation of a stable complex. GrpE releases ADP from DnaK; ATP binding to DnaK triggers the release of the substrate protein, thus completing the reaction cycle. Several rounds of ATP-dependent interactions between DnaJ, DnaK and GrpE are required for fully efficient folding. Also involved, together with DnaK and GrpE, in the DNA replication of plasmids through activation of initiation proteins. The polypeptide is Chaperone protein DnaJ (Caulobacter vibrioides (strain ATCC 19089 / CIP 103742 / CB 15) (Caulobacter crescentus)).